A 407-amino-acid polypeptide reads, in one-letter code: Zinc finger protein 260 (407 aa).

3 disordered regions span residues 1–21 (MLES…PGES), 39–72 (VEHK…HLRS), and 96–124 (SHQK…RNQR). The C2H2-type 1 zinc-finger motif lies at 23–45 (YECNECKETFSLEQNFVEHKKTH). Composition is skewed to basic and acidic residues over residues 39–51 (VEHK…EKSP) and 100–111 (QHTEERPSESKK). The C2H2-type 2; degenerate zinc finger occupies 51–73 (PECTGCGEESSQASSLTLHLRSR). The C2H2-type 3 zinc finger occupies 79–101 (YKCGECGKAFSQRGNFLSHQKQH). The span at 115-124 (PMTTTVRNQR) shows a compositional bias: polar residues. C2H2-type zinc fingers lie at residues 131–153 (YACK…EKIH), 159–181 (FECS…QNIH), 187–209 (FKCN…QRIH), 215–237 (YECK…QRSH), 243–265 (YTCK…EKIH), 271–293 (YKCN…HNIH), 299–321 (YECN…VRIH), 327–349 (YECK…MRSH), 355–377 (YGCN…MRIH), and 383–405 (YQCS…QRIH).

This sequence belongs to the krueppel C2H2-type zinc-finger protein family. As to quaternary structure, binds DNA. Interacts with GATA4. Predominantly present in heart. Outside the heart, it is detected in embryonic and postnatal vascular smooth muscle cells and in epithelial cells of the lung, gut and kidney at sites of epithelial morphogenesis and in the spinal cord (at protein level).

It is found in the nucleus. Functionally, transcription factor that acts as a cardiac regulator and an effector of alpha1-adrenergic signaling. Binds to PE response elements (PERE) present in the promoter of genes such as ANF/NPPA and acts as a direct transcriptional activator of NPPA. Also acts as a cofactor with GATA4, a key cardiac regulator. In Mus musculus (Mouse), this protein is Zinc finger protein 260 (Znf260).